The following is a 129-amino-acid chain: Small ribosomal subunit protein uS11 (129 aa).

The protein belongs to the universal ribosomal protein uS11 family. Part of the 30S ribosomal subunit. Interacts with proteins S7 and S18. Binds to IF-3.

Functionally, located on the platform of the 30S subunit, it bridges several disparate RNA helices of the 16S rRNA. Forms part of the Shine-Dalgarno cleft in the 70S ribosome. The sequence is that of Small ribosomal subunit protein uS11 from Pseudomonas fluorescens (strain SBW25).